The primary structure comprises 445 residues: Trigger factor (445 aa).

Positions 163–248 constitute a PPIase FKBP-type domain; that stretch reads GDTVVIDYVG…IHEVKVKELP (86 aa). The disordered stretch occupies residues 425–445; the sequence is KEVESAKDDADKEASDAKADK.

Belongs to the FKBP-type PPIase family. Tig subfamily.

It localises to the cytoplasm. It catalyses the reaction [protein]-peptidylproline (omega=180) = [protein]-peptidylproline (omega=0). Involved in protein export. Acts as a chaperone by maintaining the newly synthesized protein in an open conformation. Functions as a peptidyl-prolyl cis-trans isomerase. In Lacticaseibacillus casei (strain BL23) (Lactobacillus casei), this protein is Trigger factor.